Consider the following 134-residue polypeptide: ATP synthase epsilon chain, chloroplastic (134 aa).

It belongs to the ATPase epsilon chain family. In terms of assembly, F-type ATPases have 2 components, CF(1) - the catalytic core - and CF(0) - the membrane proton channel. CF(1) has five subunits: alpha(3), beta(3), gamma(1), delta(1), epsilon(1). CF(0) has three main subunits: a, b and c.

It is found in the plastid. The protein localises to the chloroplast thylakoid membrane. Functionally, produces ATP from ADP in the presence of a proton gradient across the membrane. The polypeptide is ATP synthase epsilon chain, chloroplastic (Drimys granadensis).